Consider the following 181-residue polypeptide: Protein GrpE (181 aa).

The span at 1–12 (MENTQENPTTPS) shows a compositional bias: polar residues. Residues 1-33 (MENTQENPTTPSAEDIGSEKQAAQGAAPAAEAA) form a disordered region. Residues 21–33 (QAAQGAAPAAEAA) show a composition bias toward low complexity.

Belongs to the GrpE family. Homodimer.

The protein localises to the cytoplasm. Participates actively in the response to hyperosmotic and heat shock by preventing the aggregation of stress-denatured proteins, in association with DnaK and GrpE. It is the nucleotide exchange factor for DnaK and may function as a thermosensor. Unfolded proteins bind initially to DnaJ; upon interaction with the DnaJ-bound protein, DnaK hydrolyzes its bound ATP, resulting in the formation of a stable complex. GrpE releases ADP from DnaK; ATP binding to DnaK triggers the release of the substrate protein, thus completing the reaction cycle. Several rounds of ATP-dependent interactions between DnaJ, DnaK and GrpE are required for fully efficient folding. The sequence is that of Protein GrpE from Burkholderia cenocepacia (strain HI2424).